The following is a 469-amino-acid chain: Flap endonuclease 1-B (469 aa).

The interval 1-103 (MGIKGLTGLL…GVLSKRLERR (103 aa)) is N-domain. Mg(2+) is bound at residue D32. Residues R45 and R69 each contribute to the DNA site. D85, E157, E159, D183, and D185 together coordinate Mg(2+). The segment at 121–257 (DVDRFSRRTV…KSALKLIREY (137 aa)) is I-domain. E157 provides a ligand contact to DNA. Residues G235 and D237 each contribute to the DNA site. Position 237 (D237) interacts with Mg(2+). Residues 274–354 (QKAAQAAVES…GGMQIPEEWP (81 aa)) form a disordered region. Acidic residues-rich tracts occupy residues 282–295 (ESDE…EDEP) and 302–317 (EMPD…EEEA). The span at 326–342 (PKKKKASSKTKEKRKGK) shows a compositional bias: basic residues. The segment at 412–420 (QQGRLDGFF) is interaction with PCNA. Positions 424–469 (PKEKAAAPAPVGKAKGKGKIDAKAKGTKRKVDEKAESSAGKKPRKK) are disordered. Residues 441–459 (GKIDAKAKGTKRKVDEKAE) show a composition bias toward basic and acidic residues.

This sequence belongs to the XPG/RAD2 endonuclease family. FEN1 subfamily. As to quaternary structure, interacts with PCNA. Three molecules of FEN1 bind to one PCNA trimer with each molecule binding to one PCNA monomer. PCNA stimulates the nuclease activity without altering cleavage specificity. It depends on Mg(2+) as a cofactor. Post-translationally, phosphorylated. Phosphorylation upon DNA damage induces relocalization to the nuclear plasma.

It localises to the nucleus. The protein localises to the nucleolus. The protein resides in the nucleoplasm. Its subcellular location is the mitochondrion. Its function is as follows. Structure-specific nuclease with 5'-flap endonuclease and 5'-3' exonuclease activities involved in DNA replication and repair. During DNA replication, cleaves the 5'-overhanging flap structure that is generated by displacement synthesis when DNA polymerase encounters the 5'-end of a downstream Okazaki fragment. It enters the flap from the 5'-end and then tracks to cleave the flap base, leaving a nick for ligation. Also involved in the long patch base excision repair (LP-BER) pathway, by cleaving within the apurinic/apyrimidinic (AP) site-terminated flap. Acts as a genome stabilization factor that prevents flaps from equilibrating into structures that lead to duplications and deletions. Also possesses 5'-3' exonuclease activity on nicked or gapped double-stranded DNA, and exhibits RNase H activity. Also involved in replication and repair of rDNA and in repairing mitochondrial DNA. This is Flap endonuclease 1-B from Laccaria bicolor (strain S238N-H82 / ATCC MYA-4686) (Bicoloured deceiver).